Here is a 732-residue protein sequence, read N- to C-terminus: Integrator complex subunit 13 (732 aa).

A compositionally biased stretch (basic and acidic residues) spans 564–648; that stretch reads PPEEEERKKR…DETPHMEKSK (85 aa). The segment at 564–650 is disordered; it reads PPEEEERKKR…TPHMEKSKGP (87 aa). The Nuclear localization signal (NLS) motif lies at 572-582; that stretch reads KRGRKREDRED. Lys-611 is covalently cross-linked (Glycyl lysine isopeptide (Lys-Gly) (interchain with G-Cter in SUMO2)). 3 positions are modified to phosphoserine: Ser-623, Ser-626, and Ser-678. Positions 649-694 are cleavage module binding motif (CMBM); sequence GPVSLLSLWSNRINTANSRKHQEFAGRLNSVNNRAELYQHLKEENG.

This sequence belongs to the Integrator subunit 13 family. Component of the Integrator complex, composed of core subunits INTS1, INTS2, INTS3, INTS4, INTS5, INTS6, INTS7, INTS8, INTS9/RC74, INTS10, INTS11/CPSF3L, INTS12, INTS13, INTS14 and INTS15. The core complex associates with protein phosphatase 2A subunits PPP2CA and PPP2R1A, to form the Integrator-PP2A (INTAC) complex. INTS13 is part of the tail subcomplex, composed of INTS10, INTS13, INTS14 and INTS15. Interacts with transcription factors ZNF609 and ZNF655. Interacts with PAFAH1B1; this interaction may be required for proper recruitment of dynein complexes to the nuclear envelope at prophase.

It localises to the nucleus. It is found in the cytoplasm. Its function is as follows. Component of the integrator complex, a multiprotein complex that terminates RNA polymerase II (Pol II) transcription in the promoter-proximal region of genes. The integrator complex provides a quality checkpoint during transcription elongation by driving premature transcription termination of transcripts that are unfavorably configured for transcriptional elongation: the complex terminates transcription by (1) catalyzing dephosphorylation of the C-terminal domain (CTD) of Pol II subunit POLR2A/RPB1 and SUPT5H/SPT5, (2) degrading the exiting nascent RNA transcript via endonuclease activity and (3) promoting the release of Pol II from bound DNA. The integrator complex is also involved in terminating the synthesis of non-coding Pol II transcripts, such as enhancer RNAs (eRNAs), small nuclear RNAs (snRNAs), telomerase RNAs and long non-coding RNAs (lncRNAs). Within the integrator complex, INTS13 is part of the integrator tail module and acts as a platform for the recruitment of transcription factors at promoters. At prophase, mediates recruitment of cytoplasmic dynein to the nuclear envelope, a step important for proper centrosome-nucleus coupling. At G2/M phase, may be required for proper spindle formation and execution of cytokinesis. The polypeptide is Integrator complex subunit 13 (Mus musculus (Mouse)).